The primary structure comprises 515 residues: MNDQVIIFDTTLRDGEQALSASLTVKEKLQIAYALERLGVDVIEAGFPVSSPGDFESVQTIARNIKNSRVCALSRAVEKDIDAAAEALKVAEAFRIHTFISTSTIHVQDKLRRSYDDVVEMGVRAVKHARKYTDDVEFSCEDAGRTPIDNLCRMVEAAINAGARTINIPDTVGYTVPSEFGGIIQTLFNRVPNIDKAIISVHCHDDLGMSVANSIAAVQAGARQVEGTINGIGERAGNCSLEEIAMIIKTRQELLGVRTGINHEEIHRTSKLVSQLCNMPIQANKAIVGANAFSHSSGIHQDGMLKNKNTYEIMTPESIGLKNQALNLTSRSGRAAVKSHMDAMGYKEDEYNLDALYQDFLKLADRKGQVFDYDLEALMHFSNLREEDDYYKLNYLSVQSGSVMATTSIKLLCGDEEKCEAAVGNGPVDALYQCIYRLTGYDIVLDKFDLTAKGEGEDGLGQADIIANYKGRKYHGTGISTDIVEASGQALLHVINSIHRADEIAEMKQKKIATV.

The Pyruvate carboxyltransferase domain maps to 5 to 267 (VIIFDTTLRD…RTGINHEEIH (263 aa)). D14, H202, H204, and N238 together coordinate Mn(2+). The segment at 392–515 (KLNYLSVQSG…EMKQKKIATV (124 aa)) is regulatory domain.

The protein belongs to the alpha-IPM synthase/homocitrate synthase family. LeuA type 1 subfamily. In terms of assembly, homodimer. Mn(2+) is required as a cofactor.

Its subcellular location is the cytoplasm. The enzyme catalyses 3-methyl-2-oxobutanoate + acetyl-CoA + H2O = (2S)-2-isopropylmalate + CoA + H(+). Its pathway is amino-acid biosynthesis; L-leucine biosynthesis; L-leucine from 3-methyl-2-oxobutanoate: step 1/4. Its function is as follows. Catalyzes the condensation of the acetyl group of acetyl-CoA with 3-methyl-2-oxobutanoate (2-ketoisovalerate) to form 3-carboxy-3-hydroxy-4-methylpentanoate (2-isopropylmalate). This chain is 2-isopropylmalate synthase, found in Vibrio vulnificus (strain CMCP6).